We begin with the raw amino-acid sequence, 177 residues long: Protein BROTHER of FT and TFL 1 (177 aa).

It belongs to the phosphatidylethanolamine-binding protein family.

Its subcellular location is the cytoplasm. Functionally, may form complexes with phosphorylated ligands by interfering with kinases and their effectors. The polypeptide is Protein BROTHER of FT and TFL 1 (BFT) (Arabidopsis thaliana (Mouse-ear cress)).